A 308-amino-acid polypeptide reads, in one-letter code: MADKTKILIIGGTGYIGKFIVEASAKSEHPTFALARESTISDPVKGKIIQGFKNSGVTILTGDLYDHESLVKAIKQVDVVISTVGQLQLADQVKIIAAIKEAGNVKRFFPSDFGTDVDRCHAVEPAKSSFEIKSQIRRAIEAEGIPYTFVSANYFAGYSLPTLVQPEVTAPPRDKVIILGDGNAKAVFNEENDIGTYTIKAVDDARTLNKILYIKPPKNIYSFNELVALWEKKIGKTLEKIYVPEEQVLKQIQESPFPINIVMAINHSAFVKGDLTNFKIEPSFGVEASELYPDVKYTTVEEYLDQFV.

NADP(+) contacts are provided by residues 11 to 17 (GGTGYIG), arginine 36, and lysine 45. Lysine 133 acts as the Proton acceptor in catalysis. Arginine 137 contacts NADP(+).

This sequence belongs to the NmrA-type oxidoreductase family. Isoflavone reductase subfamily. Homodimer.

Its subcellular location is the cytoplasm. In Olea europaea (Common olive), this protein is Isoflavone reductase-like protein.